A 271-amino-acid chain; its full sequence is N-acetyltransferase ECO1 (271 aa).

The interval 1–38 (MKTYRAKRKYLSESEDDVFSSSPTQSPETSPLQPPNES) is disordered. Low complexity predominate over residues 20–31 (SSSPTQSPETSP). The segment at 80–104 (TTCKTCGMTYQVAYGPDISAHKSFH) adopts a CCHH-type zinc-finger fold.

It belongs to the acetyltransferase family. ECO subfamily.

The protein resides in the nucleus. In terms of biological role, probable acetyltransferase required for the establishment of sister chromatid cohesion and couple the processes of cohesion and DNA replication to ensure that only sister chromatids become paired together. In contrast to the structural cohesins, the deposition and establishment factors are required only during S phase. Acts by acetylating the cohesin complex component SMC3. The sequence is that of N-acetyltransferase ECO1 (ECO1) from Yarrowia lipolytica (strain CLIB 122 / E 150) (Yeast).